A 605-amino-acid polypeptide reads, in one-letter code: Sodium-independent sulfate anion transporter (605 aa).

The Extracellular segment spans residues 1-50; the sequence is MPSSLKGLGQAWLSSSSMALSACCSVSAWQKRLPVLAWLPRYSLQWLKMD. A helical membrane pass occupies residues 51–71; it reads FIAGLSVGLTVIPQALAYAEV. Alanine 72 is a topological domain (cytoplasmic). Residues 73 to 93 form a helical membrane-spanning segment; that stretch reads GLPPQYGLYSAFTGCFVYVFL. Residues 94 to 98 are Extracellular-facing; the sequence is GTSRD. Residues 99-119 traverse the membrane as a helical segment; the sequence is VTLGPTAIMSLLVSFYTFHEP. Topologically, residues 120–122 are cytoplasmic; the sequence is AYA. A helical membrane pass occupies residues 123–143; it reads VLLTFLSGCIQLAMGLLHLGF. At 144–146 the chain is on the extracellular side; the sequence is LLD. Residues 147 to 167 form a helical membrane-spanning segment; the sequence is FISCPVIKGFTSAAAIIIGFG. At 168-196 the chain is on the cytoplasmic side; sequence QIKNLLGLHNIPRQFFLQVYHTFLSVGET. Residues 197 to 217 form a helical membrane-spanning segment; the sequence is RLGDAILGLVCMVLLLVLKLM. Over 218–249 the chain is Extracellular; it reads RDRIPPVHPEMPLCVRLSCGLVWTTATARNAL. The helical transmembrane segment at 250–270 threads the bilayer; it reads VVSFAALVAYSFEVTGYQPFI. Over 271-303 the chain is Cytoplasmic; the sequence is LTGEIAKGLPPVRVPPFSVTMANGTVSFTRMVQ. Residues 304-324 form a helical membrane-spanning segment; sequence DLGAGLAVVPLIGLLESIAVA. The Extracellular portion of the chain corresponds to 325-340; the sequence is KAFASQNDYHVDANQE. Residues 341–361 form a helical membrane-spanning segment; the sequence is LLAIGLTNMLGSFVSSYPITG. Over 362–373 the chain is Cytoplasmic; sequence SFGRTAVNAQSG. Residues 374-394 traverse the membrane as a helical segment; sequence VCTPAGGLVTGALVLLSLDYL. Residues 395–397 lie on the Extracellular side of the membrane; the sequence is TSL. A helical membrane pass occupies residues 398–418; the sequence is FYYIPKAALAAVIIMAVVPLF. Residues 419–447 are Cytoplasmic-facing; the sequence is DTKIFGMLWRVKRLDLLPLCATFLLCFWE. The chain crosses the membrane as a helical span at residues 448-468; it reads VQYGILAGTLVSTLFLLHFVA. The Extracellular segment spans residues 469–605; it reads RPKTQVSEGP…PEHKVTLLTA (137 aa). Residues 479–582 form the STAS domain; the sequence is VLILQLASGL…EKAEQYVRQE (104 aa).

It belongs to the SLC26A/SulP transporter (TC 2.A.53) family.

Its subcellular location is the cell membrane. The protein localises to the lysosome membrane. The protein resides in the apical cell membrane. It is found in the basolateral cell membrane. The catalysed reaction is hydrogencarbonate(in) + chloride(out) = hydrogencarbonate(out) + chloride(in). The enzyme catalyses sulfate(in) + H(+)(in) = sulfate(out) + H(+)(out). It carries out the reaction oxalate(in) + chloride(out) = oxalate(out) + chloride(in). In terms of biological role, sodium-independent anion exchanger mediating bicarbonate, chloride, sulfate and oxalate transport. Exhibits sodium-independent sulfate anion transporter activity that may cooperate with SLC26A2 to mediate DIDS-sensitive sulfate uptake into high endothelial venules endothelial cells (HEVEC). In the kidney, mediates chloride-bicarbonate exchange, facilitating V-ATPase-mediated acid secretion. May function as a chloride channel, playing an important role in moderating chloride homeostasis and neuronal activity in the cerebellum. The polypeptide is Sodium-independent sulfate anion transporter (Slc26a11) (Cavia porcellus (Guinea pig)).